Consider the following 78-residue polypeptide: D-alanyl carrier protein (78 aa).

In terms of domain architecture, Carrier spans 1-77; it reads MDLKEQIVEI…KVVAKVESLI (77 aa). Ser-35 carries the O-(pantetheine 4'-phosphoryl)serine modification.

Belongs to the DltC family. In terms of processing, 4'-phosphopantetheine is transferred from CoA to a specific serine of apo-DCP.

It localises to the cytoplasm. It participates in cell wall biogenesis; lipoteichoic acid biosynthesis. Carrier protein involved in the D-alanylation of lipoteichoic acid (LTA). The loading of thioester-linked D-alanine onto DltC is catalyzed by D-alanine--D-alanyl carrier protein ligase DltA. The DltC-carried D-alanyl group is further transferred to cell membrane phosphatidylglycerol (PG) by forming an ester bond, probably catalyzed by DltD. D-alanylation of LTA plays an important role in modulating the properties of the cell wall in Gram-positive bacteria, influencing the net charge of the cell wall. In Leuconostoc mesenteroides subsp. mesenteroides (strain ATCC 8293 / DSM 20343 / BCRC 11652 / CCM 1803 / JCM 6124 / NCDO 523 / NBRC 100496 / NCIMB 8023 / NCTC 12954 / NRRL B-1118 / 37Y), this protein is D-alanyl carrier protein.